The sequence spans 254 residues: Ribosomal RNA small subunit methyltransferase J (254 aa).

S-adenosyl-L-methionine is bound by residues 101-102, 117-118, 153-154, and D171; these read RD, ER, and SS.

This sequence belongs to the methyltransferase superfamily. RsmJ family.

The protein localises to the cytoplasm. It catalyses the reaction guanosine(1516) in 16S rRNA + S-adenosyl-L-methionine = N(2)-methylguanosine(1516) in 16S rRNA + S-adenosyl-L-homocysteine + H(+). In terms of biological role, specifically methylates the guanosine in position 1516 of 16S rRNA. This chain is Ribosomal RNA small subunit methyltransferase J, found in Enterobacter sp. (strain 638).